The chain runs to 455 residues: Asparagine--tRNA ligase (455 aa).

The protein belongs to the class-II aminoacyl-tRNA synthetase family. In terms of assembly, homodimer.

It is found in the cytoplasm. It carries out the reaction tRNA(Asn) + L-asparagine + ATP = L-asparaginyl-tRNA(Asn) + AMP + diphosphate + H(+). In Lawsonia intracellularis (strain PHE/MN1-00), this protein is Asparagine--tRNA ligase.